A 384-amino-acid polypeptide reads, in one-letter code: Ceramide very long chain fatty acid hydroxylase SCS7 (384 aa).

The Cytoplasmic portion of the chain corresponds to 1-197; the sequence is MSTNTSKTLE…NFLEPLTKTA (197 aa). Residues 9–90 form the Cytochrome b5 heme-binding domain; that stretch reads LELFSKKTVQ…EDEYLIGYLA (82 aa). Residues His45 and His72 each coordinate heme. A helical transmembrane segment spans residues 198-216; that stretch reads WWVVPVAWLPVVVYHMGVA. Over 217-221 the chain is Lumenal; it reads LKNMN. A helical membrane pass occupies residues 222–246; the sequence is QLFACFLFCVGVFVWTLIEYGLHRF. Residues His244, His249, His268, His271, and His272 each contribute to the Zn(2+) site. The Cytoplasmic portion of the chain corresponds to 247 to 284; sequence LFHFDDWLPESNIAFATHFLLHGCHHYLPMDKYRLVMP. The helical transmembrane segment at 285–302 threads the bilayer; the sequence is PTLFVILCAPFYKLVFAL. Over 303–304 the chain is Lumenal; that stretch reads LP. A helical membrane pass occupies residues 305–328; it reads LYWAYAGFAGGLFGYVCYDECHFF. His326, His330, His345, His348, and His349 together coordinate Zn(2+). Topologically, residues 329-384 are cytoplasmic; it reads LHHSKLPPFMRKLKKYHLEHHYKNYQLGFGVTSWFWDEVFGTYLGPDAPLSKMKYE.

The protein belongs to the sterol desaturase family. SCS7 subfamily. Zn(2+) serves as cofactor.

It localises to the endoplasmic reticulum membrane. The catalysed reaction is an N-(1,2 saturated acyl)-(4R)-hydroxysphinganine + 2 Fe(II)-[cytochrome b5] + O2 + 2 H(+) = an N-(2R-hydroxyacyl)-4R-hydroxysphinganine + 2 Fe(III)-[cytochrome b5] + H2O. The enzyme catalyses an N-(1,2-saturated acyl)sphinganine + 2 Fe(II)-[cytochrome b5] + O2 + 2 H(+) = an N-[(2'R)-hydroxyacyl]sphinganine + 2 Fe(III)-[cytochrome b5] + H2O. It carries out the reaction N-hexacosanoyl-(4R)-hydroxysphinganine + 2 Fe(II)-[cytochrome b5] + O2 + 2 H(+) = N-(2-hydroxyhexacosanyl)-(4R)-hydroxysphinganine + 2 Fe(III)-[cytochrome b5] + H2O. The protein operates within sphingolipid metabolism. In terms of biological role, ceramide hydroxylase involved in the hydroxylation of sphingolipid-associated very long chain fatty acids. Postulated to hydroxylate the very long chain fatty acid of dihydroceramides and phytoceramides at C-2. In Saccharomyces cerevisiae (strain ATCC 204508 / S288c) (Baker's yeast), this protein is Ceramide very long chain fatty acid hydroxylase SCS7.